Consider the following 151-residue polypeptide: MLP-like protein 329 (151 aa).

Belongs to the MLP family.

This Arabidopsis thaliana (Mouse-ear cress) protein is MLP-like protein 329 (MLP329).